A 137-amino-acid polypeptide reads, in one-letter code: ATP synthase epsilon chain (137 aa).

It belongs to the ATPase epsilon chain family. In terms of assembly, F-type ATPases have 2 components, CF(1) - the catalytic core - and CF(0) - the membrane proton channel. CF(1) has five subunits: alpha(3), beta(3), gamma(1), delta(1), epsilon(1). CF(0) has three main subunits: a, b and c.

The protein resides in the cellular thylakoid membrane. Functionally, produces ATP from ADP in the presence of a proton gradient across the membrane. The polypeptide is ATP synthase epsilon chain (Nostoc punctiforme (strain ATCC 29133 / PCC 73102)).